Consider the following 212-residue polypeptide: MKKIPRIGVGGPVGSGKTAIIEAVVPILIKLGYRILVITNDIVTTEDAKHVQRTLKGVLIEDRIVGVETGGCPHTAVREDPSMNLAAVEEMEAKFPDTDLVLLESGGDNLTLTFSPALIDFFIYVIDVAAGDKIPRKNGPGISQSDILVINKTDLAPYVGASLQVMDDDSRMMRGKKPFVFTNCKTNEGIDDLVHLIRENVLFDTEVSKESA.

11–18 (GPVGSGKT) provides a ligand contact to GTP.

It belongs to the SIMIBI class G3E GTPase family. UreG subfamily. As to quaternary structure, homodimer. UreD, UreF and UreG form a complex that acts as a GTP-hydrolysis-dependent molecular chaperone, activating the urease apoprotein by helping to assemble the nickel containing metallocenter of UreC. The UreE protein probably delivers the nickel.

The protein localises to the cytoplasm. In terms of biological role, facilitates the functional incorporation of the urease nickel metallocenter. This process requires GTP hydrolysis, probably effectuated by UreG. The chain is Urease accessory protein UreG 2 from Brucella abortus (strain 2308).